Here is a 459-residue protein sequence, read N- to C-terminus: uncharacterized protein (459 aa).

This sequence belongs to the Rab GDI family.

It is found in the cytoplasm. The protein resides in the nucleus. This is an uncharacterized protein from Schizosaccharomyces pombe (strain 972 / ATCC 24843) (Fission yeast).